The primary structure comprises 313 residues: MQLQYVLTLLWIIFAQNVFSRPTISKVAPENIEFFGRVTSYQKPVKVPDPISMYQQFAGLAQQSNCFKTKINATIGDAQLLFSWGDDDKNQRMQIFRSKSLGIVTSWSGMNVTSLTSLLSAADLFLVDVDRKYFPRVKKGSKLYDGFQNAFKRAAPVLVKKIQYFQELYDEDRVSLTGLSFGAALADIALPYVKENLKRGHIHRVVVFGHPRIGNQEWADSLDTYAEGKFFYVVNGNDIVPHLPPREFGYQQPSGQIWINPSNSSNWKLYPGQENVHGANSIFGFSIKDHTGVYFRTEIGSFWGHCPATIGQD.

The first 20 residues, 1–20 (MQLQYVLTLLWIIFAQNVFS), serve as a signal peptide directing secretion. A disulfide bond links C66 and C306. N72 and N111 each carry an N-linked (GlcNAc...) asparagine glycan. The active-site Nucleophile is S180. The active site involves D238. N-linked (GlcNAc...) asparagine glycosylation is present at N263. H290 is a catalytic residue.

The protein belongs to the AB hydrolase superfamily. Lipase family. Class 3 subfamily.

The protein localises to the secreted. It localises to the cell wall. It carries out the reaction a monoacylglycerol + H2O = glycerol + a fatty acid + H(+). The catalysed reaction is a diacylglycerol + H2O = a monoacylglycerol + a fatty acid + H(+). Functionally, secreted lipase involved in Dandruff and seborrheic dermatitis (D/SD) probably via lipase-mediated breakdown of sebaceous lipids and release of irritating free fatty acids. Shows activity against monoglyceride and diglyceride substrates, but not triglyceride substrates and does not exhibit regio-selective production of diacylglycerols. Cleaves oleic acid from 1,2 isomers of diolein on both the 1 and the 2 position of the glycerol backbone, resulting mainly in free fatty acids but no monoolein is detected. Shows activity on monoolein and liberates mostly free fatty acids, but can also perform the reverse reaction and produce diolein. This is Secreted mono- and diacylglycerol lipase MDL5 from Malassezia globosa (strain ATCC MYA-4612 / CBS 7966) (Dandruff-associated fungus).